The sequence spans 341 residues: Protein pelota homolog (341 aa).

Belongs to the eukaryotic release factor 1 family. Pelota subfamily. Monomer. A divalent metal cation serves as cofactor.

It localises to the cytoplasm. In terms of biological role, may function in recognizing stalled ribosomes, interact with stem-loop structures in stalled mRNA molecules, and effect endonucleolytic cleavage of the mRNA. May play a role in the release non-functional ribosomes and degradation of damaged mRNAs. Has endoribonuclease activity. The polypeptide is Protein pelota homolog (Methanospirillum hungatei JF-1 (strain ATCC 27890 / DSM 864 / NBRC 100397 / JF-1)).